Here is a 347-residue protein sequence, read N- to C-terminus: Autoinducer 2 import system permease protein LsrC (347 aa).

9 consecutive transmembrane segments (helical) span residues 14–34 (LLAI…YLSV), 39–59 (MVFS…MVML), 72–92 (GMCA…PVAC), 93–113 (LATL…VAWL), 115–135 (IPAI…MLLW), 155–175 (VFLG…LMAW), 213–233 (LNGG…GFIP), 249–269 (VLGG…ILGA), and 284–304 (IPAW…LVFD).

This sequence belongs to the binding-protein-dependent transport system permease family. AraH/RbsC subfamily. The complex is composed of two ATP-binding proteins (LsrA), two transmembrane proteins (LsrC and LsrD) and a solute-binding protein (LsrB).

It is found in the cell inner membrane. Part of the ABC transporter complex LsrABCD involved in autoinducer 2 (AI-2) import. Probably responsible for the translocation of the substrate across the membrane. The polypeptide is Autoinducer 2 import system permease protein LsrC (lsrC) (Salmonella choleraesuis (strain SC-B67)).